We begin with the raw amino-acid sequence, 697 residues long: DNA ligase (697 aa).

NAD(+)-binding positions include 41–45 (DPVYD), 90–91 (SL), and Glu-129. Lys-131 (N6-AMP-lysine intermediate) is an active-site residue. The NAD(+) site is built by Arg-152, Glu-189, Lys-308, and Lys-332. Zn(2+) contacts are provided by Cys-426, Cys-429, Cys-444, and Cys-449. The 81-residue stretch at 617–697 (AANHHLTGST…ALQNMLRGST (81 aa)) folds into the BRCT domain.

It belongs to the NAD-dependent DNA ligase family. LigA subfamily. Requires Mg(2+) as cofactor. Mn(2+) serves as cofactor.

The catalysed reaction is NAD(+) + (deoxyribonucleotide)n-3'-hydroxyl + 5'-phospho-(deoxyribonucleotide)m = (deoxyribonucleotide)n+m + AMP + beta-nicotinamide D-nucleotide.. Its function is as follows. DNA ligase that catalyzes the formation of phosphodiester linkages between 5'-phosphoryl and 3'-hydroxyl groups in double-stranded DNA using NAD as a coenzyme and as the energy source for the reaction. It is essential for DNA replication and repair of damaged DNA. The sequence is that of DNA ligase from Synechococcus sp. (strain CC9311).